The primary structure comprises 84 residues: Small ribosomal subunit protein bS20 (84 aa).

It belongs to the bacterial ribosomal protein bS20 family.

Its function is as follows. Binds directly to 16S ribosomal RNA. The chain is Small ribosomal subunit protein bS20 from Latilactobacillus sakei subsp. sakei (strain 23K) (Lactobacillus sakei subsp. sakei).